Consider the following 89-residue polypeptide: DNA/RNA-binding protein Alba (89 aa).

An N6-acetyllysine modification is found at K11.

Belongs to the histone-like Alba family. Post-translationally, acetylated. Acetylation at Lys-11 decreases DNA-binding affinity.

It localises to the cytoplasm. The protein resides in the chromosome. Functionally, binds double-stranded DNA tightly but without sequence specificity. Involved in DNA compaction. This chain is DNA/RNA-binding protein Alba, found in Thermoplasma volcanium (strain ATCC 51530 / DSM 4299 / JCM 9571 / NBRC 15438 / GSS1).